The primary structure comprises 452 residues: Bifunctional protein GlmU (452 aa).

Positions Met-1 to Arg-225 are pyrophosphorylase. Residues Leu-6–Gly-9, Lys-20, Gln-71, and Gly-76–Thr-77 each bind UDP-N-acetyl-alpha-D-glucosamine. Residue Asp-99 coordinates Mg(2+). Residues Gly-136, Glu-151, Asn-166, and Asn-223 each coordinate UDP-N-acetyl-alpha-D-glucosamine. Asn-223 serves as a coordination point for Mg(2+). Residues Ala-226 to Lys-246 are linker. Residues Gly-247–Gln-452 form an N-acetyltransferase region. UDP-N-acetyl-alpha-D-glucosamine-binding residues include Arg-329 and Lys-347. His-359 acts as the Proton acceptor in catalysis. Positions 362 and 373 each coordinate UDP-N-acetyl-alpha-D-glucosamine. Acetyl-CoA contacts are provided by residues Ala-376, Asn-382–Tyr-383, Ser-401, Ala-419, and Arg-436.

This sequence in the N-terminal section; belongs to the N-acetylglucosamine-1-phosphate uridyltransferase family. It in the C-terminal section; belongs to the transferase hexapeptide repeat family. In terms of assembly, homotrimer. Mg(2+) serves as cofactor.

It localises to the cytoplasm. It catalyses the reaction alpha-D-glucosamine 1-phosphate + acetyl-CoA = N-acetyl-alpha-D-glucosamine 1-phosphate + CoA + H(+). It carries out the reaction N-acetyl-alpha-D-glucosamine 1-phosphate + UTP + H(+) = UDP-N-acetyl-alpha-D-glucosamine + diphosphate. Its pathway is nucleotide-sugar biosynthesis; UDP-N-acetyl-alpha-D-glucosamine biosynthesis; N-acetyl-alpha-D-glucosamine 1-phosphate from alpha-D-glucosamine 6-phosphate (route II): step 2/2. It functions in the pathway nucleotide-sugar biosynthesis; UDP-N-acetyl-alpha-D-glucosamine biosynthesis; UDP-N-acetyl-alpha-D-glucosamine from N-acetyl-alpha-D-glucosamine 1-phosphate: step 1/1. The protein operates within bacterial outer membrane biogenesis; LPS lipid A biosynthesis. Its function is as follows. Catalyzes the last two sequential reactions in the de novo biosynthetic pathway for UDP-N-acetylglucosamine (UDP-GlcNAc). The C-terminal domain catalyzes the transfer of acetyl group from acetyl coenzyme A to glucosamine-1-phosphate (GlcN-1-P) to produce N-acetylglucosamine-1-phosphate (GlcNAc-1-P), which is converted into UDP-GlcNAc by the transfer of uridine 5-monophosphate (from uridine 5-triphosphate), a reaction catalyzed by the N-terminal domain. The sequence is that of Bifunctional protein GlmU from Thermodesulfovibrio yellowstonii (strain ATCC 51303 / DSM 11347 / YP87).